The primary structure comprises 1487 residues: Chromosome partition protein MukB (1487 aa).

34-41 (GGNGAGKS) is an ATP binding site. Coiled coils occupy residues 297 to 426 (SSRE…LEKA), 460 to 666 (ALKH…RLAS), 781 to 806 (RAAR…AKAA), 836 to 1111 (EQAL…RTFV), and 1210 to 1266 (VEAI…LSNI). The interval 667–784 (PGGSNDPRLK…VIPLFGRAAR (118 aa)) is flexible hinge.

This sequence belongs to the SMC family. MukB subfamily. In terms of assembly, homodimerization via its hinge domain. Binds to DNA via its C-terminal region. Interacts, and probably forms a ternary complex, with MukE and MukF via its C-terminal region. The complex formation is stimulated by calcium or magnesium. Interacts with tubulin-related protein FtsZ.

The protein resides in the cytoplasm. Its subcellular location is the nucleoid. Functionally, plays a central role in chromosome condensation, segregation and cell cycle progression. Functions as a homodimer, which is essential for chromosome partition. Involved in negative DNA supercoiling in vivo, and by this means organize and compact chromosomes. May achieve or facilitate chromosome segregation by condensation DNA from both sides of a centrally located replisome during cell division. This chain is Chromosome partition protein MukB, found in Vibrio vulnificus (strain CMCP6).